Here is a 280-residue protein sequence, read N- to C-terminus: Putative ABC transporter ATP-binding protein PYRAB03730 (280 aa).

The ABC transporter domain maps to 4–244 (IEVENVSFKY…VEFLERIGIR (241 aa)). 38–45 (GPSGSGKS) is a binding site for ATP.

The protein belongs to the ABC transporter superfamily.

The protein localises to the cell membrane. Its function is as follows. Probably part of an ABC transporter complex. Responsible for energy coupling to the transport system. This Pyrococcus abyssi (strain GE5 / Orsay) protein is Putative ABC transporter ATP-binding protein PYRAB03730.